Reading from the N-terminus, the 67-residue chain is UPF0434 protein Bcep1808_2639 (67 aa).

This sequence belongs to the UPF0434 family.

The chain is UPF0434 protein Bcep1808_2639 from Burkholderia vietnamiensis (strain G4 / LMG 22486) (Burkholderia cepacia (strain R1808)).